The chain runs to 58 residues: Large ribosomal subunit protein bL32 (58 aa).

The protein belongs to the bacterial ribosomal protein bL32 family.

The sequence is that of Large ribosomal subunit protein bL32 from Staphylococcus aureus (strain NCTC 8325 / PS 47).